The sequence spans 559 residues: Dihydroxy-acid dehydratase (559 aa).

Position 49 (C49) interacts with [2Fe-2S] cluster. Residue D81 participates in Mg(2+) binding. C122 lines the [2Fe-2S] cluster pocket. D123 and K124 together coordinate Mg(2+). Position 124 is an N6-carboxylysine (K124). C194 provides a ligand contact to [2Fe-2S] cluster. E446 contributes to the Mg(2+) binding site. Residue S472 is the Proton acceptor of the active site.

Belongs to the IlvD/Edd family. Homodimer. The cofactor is [2Fe-2S] cluster. Requires Mg(2+) as cofactor.

It catalyses the reaction (2R)-2,3-dihydroxy-3-methylbutanoate = 3-methyl-2-oxobutanoate + H2O. The catalysed reaction is (2R,3R)-2,3-dihydroxy-3-methylpentanoate = (S)-3-methyl-2-oxopentanoate + H2O. Its pathway is amino-acid biosynthesis; L-isoleucine biosynthesis; L-isoleucine from 2-oxobutanoate: step 3/4. It functions in the pathway amino-acid biosynthesis; L-valine biosynthesis; L-valine from pyruvate: step 3/4. Functionally, functions in the biosynthesis of branched-chain amino acids. Catalyzes the dehydration of (2R,3R)-2,3-dihydroxy-3-methylpentanoate (2,3-dihydroxy-3-methylvalerate) into 2-oxo-3-methylpentanoate (2-oxo-3-methylvalerate) and of (2R)-2,3-dihydroxy-3-methylbutanoate (2,3-dihydroxyisovalerate) into 2-oxo-3-methylbutanoate (2-oxoisovalerate), the penultimate precursor to L-isoleucine and L-valine, respectively. This Prochlorococcus marinus subsp. pastoris (strain CCMP1986 / NIES-2087 / MED4) protein is Dihydroxy-acid dehydratase.